Reading from the N-terminus, the 460-residue chain is Cysteine proteinase 7 (460 aa).

The N-terminal stretch at 1–17 is a signal peptide; sequence MKVLSALCVLLVSVATA. Positions 18-111 are cleaved as a propeptide — activation peptide; sequence KQQLSEVEYR…TESDKIFDAS (94 aa). Cystine bridges form between Cys131–Cys176 and Cys167–Cys210. The active site involves Cys134. 2 N-linked (GlcNAc...) asparagine glycosylation sites follow: Asn226 and Asn252. Cys268 and Cys445 are joined by a disulfide. The active site involves His275. The interval 285–409 is disordered; that stretch reads GSGSSGSHGG…GSSSGSNSNG (125 aa). The segment covering 294-359 has biased composition (low complexity); that stretch reads GSQSQSAGSD…QSGSQSGNSG (66 aa). Over residues 367-385 the composition is skewed to gly residues; it reads AGSGSGSGSGSGSGSGSGS. Over residues 386–409 the composition is skewed to low complexity; the sequence is VSGSASGSASGSASGSSSGSNSNG. Residue Asn423 is part of the active site.

The protein belongs to the peptidase C1 family. Glycosylated; contains GlcNAc-alpha-1-P-Ser residues. Also N-glycosylated.

It is found in the lysosome. This chain is Cysteine proteinase 7 (cprG), found in Dictyostelium discoideum (Social amoeba).